Reading from the N-terminus, the 181-residue chain is Endoribonuclease YbeY (181 aa).

Residues histidine 140, histidine 144, and histidine 150 each coordinate Zn(2+).

The protein belongs to the endoribonuclease YbeY family. Zn(2+) serves as cofactor.

The protein localises to the cytoplasm. Functionally, single strand-specific metallo-endoribonuclease involved in late-stage 70S ribosome quality control and in maturation of the 3' terminus of the 16S rRNA. In Dinoroseobacter shibae (strain DSM 16493 / NCIMB 14021 / DFL 12), this protein is Endoribonuclease YbeY.